Reading from the N-terminus, the 178-residue chain is Protein FAM89A (178 aa).

The protein belongs to the FAM89 family.

The sequence is that of Protein FAM89A (FAM89A) from Bos taurus (Bovine).